Reading from the N-terminus, the 373-residue chain is tRNA-specific 2-thiouridylase MnmA (373 aa).

Residues 12–19 (GMSGGVDS) and M38 each bind ATP. The tract at residues 98-100 (NPD) is interaction with target base in tRNA. The active-site Nucleophile is C103. C103 and C200 are disulfide-bonded. G127 provides a ligand contact to ATP. The interaction with tRNA stretch occupies residues 150–152 (KDQ). C200 (cysteine persulfide intermediate) is an active-site residue. Residues 312-313 (RY) are interaction with tRNA.

This sequence belongs to the MnmA/TRMU family.

It is found in the cytoplasm. The catalysed reaction is S-sulfanyl-L-cysteinyl-[protein] + uridine(34) in tRNA + AH2 + ATP = 2-thiouridine(34) in tRNA + L-cysteinyl-[protein] + A + AMP + diphosphate + H(+). Its function is as follows. Catalyzes the 2-thiolation of uridine at the wobble position (U34) of tRNA, leading to the formation of s(2)U34. The chain is tRNA-specific 2-thiouridylase MnmA from Streptococcus pyogenes serotype M6 (strain ATCC BAA-946 / MGAS10394).